The following is a 397-amino-acid chain: 4-hydroxyphenylpyruvate dioxygenase (397 aa).

VOC domains follow at residues 18-149 and 181-339; these read NFHH…FVEY and FIDH…IFTK. 3 residues coordinate Fe cation: H184, H267, and E350.

Belongs to the 4HPPD family. As to quaternary structure, homodimer. It depends on Fe cation as a cofactor.

The protein resides in the cytoplasm. It is found in the endoplasmic reticulum membrane. It localises to the golgi apparatus membrane. The enzyme catalyses 3-(4-hydroxyphenyl)pyruvate + O2 = homogentisate + CO2. Its pathway is amino-acid degradation; L-phenylalanine degradation; acetoacetate and fumarate from L-phenylalanine: step 3/6. In terms of biological role, catalyzes the conversion of 4-hydroxyphenylpyruvic acid to homogentisic acid, one of the steps in tyrosine catabolism. This is 4-hydroxyphenylpyruvate dioxygenase (hpd) from Danio rerio (Zebrafish).